The following is a 301-amino-acid chain: tRNA pseudouridine synthase B (301 aa).

Residue D38 is the Nucleophile of the active site.

It belongs to the pseudouridine synthase TruB family. Type 1 subfamily.

It carries out the reaction uridine(55) in tRNA = pseudouridine(55) in tRNA. Its function is as follows. Responsible for synthesis of pseudouridine from uracil-55 in the psi GC loop of transfer RNAs. The protein is tRNA pseudouridine synthase B of Limosilactobacillus reuteri (strain DSM 20016) (Lactobacillus reuteri).